A 539-amino-acid chain; its full sequence is Gamma-2-syntrophin (539 aa).

The PDZ domain maps to 73-156 (TVTLRRQPVG…DVTITVEYLR (84 aa)). The 126-residue stretch at 296 to 421 (QVVHMGWVNE…WEKAFQRATF (126 aa)) folds into the PH domain.

The protein belongs to the syntrophin family. Interacts with the dystrophin protein DMD and related proteins DTNA and DTNB.

The protein resides in the cell membrane. It is found in the sarcolemma. Its subcellular location is the cytoplasm. The protein localises to the cytoskeleton. Adapter protein that binds to and probably organizes the subcellular localization of a variety of proteins. May link various receptors to the actin cytoskeleton and the dystrophin glycoprotein complex. This chain is Gamma-2-syntrophin (Sntg2), found in Mus musculus (Mouse).